The primary structure comprises 2062 residues: Ankyrin repeat domain-containing protein 12 (2062 aa).

Disordered regions lie at residues 1-119 and 145-188; these read MPKS…GNKK and ARDN…GETP. The span at 9 to 20 shows a compositional bias: polar residues; sequence PIQSENSDSDSN. 2 stretches are compositionally biased toward basic and acidic residues: residues 41 to 57 and 100 to 117; these read PKIE…EKSS and YSEK…EAGN. Over residues 145–172 the composition is skewed to polar residues; sequence ARDNSPDSTPNHPSQTTPAQKKTPSSSS. Ser-149 carries the phosphoserine modification. The span at 173–187 shows a compositional bias: basic and acidic residues; the sequence is RQKDKVNKRNERGET. 3 ANK repeats span residues 184–213, 217–246, and 250–280; these read RGET…NVNV, AGWT…DVNT, and DDDT…PFQA. Disordered stretches follow at residues 301–338, 409–501, 538–577, 609–683, 727–788, 812–1073, 1097–1227, and 1328–1350; these read KREV…TEKD, KSFK…TRIT, ISTG…MSLQ, QKDF…DSAK, EKNI…FTSL, EKHI…LVND, KHKE…RPPV, and EESN…KPEV. Residues 306–318 are compositionally biased toward acidic residues; that stretch reads LSDDDESYTDSEE. Polar residues-rich tracts occupy residues 319 to 328 and 437 to 454; these read AQSVNPSSVD and KKIS…NSDM. Residues 455–467 show a composition bias toward basic and acidic residues; the sequence is QTKKEYVVSGEHK. Residues 468-480 show a composition bias toward basic residues; it reads QKGKVKRKLKNQN. The span at 481-498 shows a compositional bias: basic and acidic residues; sequence KNKENQELKQEKEGKENT. Ser-543 bears the Phosphoserine mark. Polar residues predominate over residues 565–575; sequence TCLSPGSSEMS. Composition is skewed to basic and acidic residues over residues 609–631, 639–649, 658–683, 727–784, 812–969, 977–1037, 1061–1072, and 1103–1157; these read QKDF…DHSP, TLKKMDKEGKT, KERE…DSAK, EKNI…KDSE, EKHI…DKES, HIQE…KDKI, KDTRPKEKRLVN, and KQKE…KQPK. Ser-630 carries the post-translational modification Phosphoserine. Phosphoserine is present on Ser-861. Polar residues predominate over residues 1161 to 1189; it reads SNRSQSVDTKNVMTLGKSSFVSDNSLNRS. Positions 1200 to 1213 are enriched in low complexity; it reads SSRSVSMISVASSE. Polar residues predominate over residues 1328-1344; the sequence is EESNQGSLLTVPGDTSP. Ser-1401 carries the phosphoserine modification. 2 disordered regions span residues 1721–1744 and 1756–1795; these read NAED…NTMA and LLSE…VPQP. Polar residues predominate over residues 1729–1744; the sequence is NQIPQRMTRNKANTMA.

Interacts with the PAS region of the p160 coactivators.

The protein localises to the nucleus. May recruit HDACs to the p160 coactivators/nuclear receptor complex to inhibit ligand-dependent transactivation. In Homo sapiens (Human), this protein is Ankyrin repeat domain-containing protein 12 (ANKRD12).